The sequence spans 151 residues: Large ribosomal subunit protein bL9 (151 aa).

This sequence belongs to the bacterial ribosomal protein bL9 family.

Functionally, binds to the 23S rRNA. In Desulforapulum autotrophicum (strain ATCC 43914 / DSM 3382 / VKM B-1955 / HRM2) (Desulfobacterium autotrophicum), this protein is Large ribosomal subunit protein bL9.